We begin with the raw amino-acid sequence, 317 residues long: GTP cyclohydrolase MptA (317 aa).

Belongs to the GTP cyclohydrolase IV family. As to quaternary structure, homodimer. Requires Fe(2+) as cofactor.

It carries out the reaction GTP + H2O = 7,8-dihydroneopterin 2',3'-cyclic phosphate + formate + diphosphate + H(+). Its pathway is cofactor biosynthesis; 5,6,7,8-tetrahydromethanopterin biosynthesis. Its function is as follows. Converts GTP to 7,8-dihydro-D-neopterin 2',3'-cyclic phosphate, the first intermediate in the biosynthesis of coenzyme methanopterin. The protein is GTP cyclohydrolase MptA of Methanococcoides burtonii (strain DSM 6242 / NBRC 107633 / OCM 468 / ACE-M).